Reading from the N-terminus, the 198-residue chain is Recombination protein RecR (198 aa).

Residues 57 to 72 (CSICGNLTDDDPCHIC) form a C4-type zinc finger. The region spanning 80 to 175 (EIILVVEDSK…KVTRLARGLA (96 aa)) is the Toprim domain.

It belongs to the RecR family.

May play a role in DNA repair. It seems to be involved in an RecBC-independent recombinational process of DNA repair. It may act with RecF and RecO. The protein is Recombination protein RecR of Streptococcus equi subsp. equi (strain 4047).